Reading from the N-terminus, the 237-residue chain is 2,3-bisphosphoglycerate-dependent phosphoglycerate mutase (237 aa).

Substrate contacts are provided by residues arginine 8 to asparagine 15, threonine 21 to glycine 22, arginine 60, glutamate 87 to tyrosine 90, lysine 98, arginine 114 to arginine 115, and glycine 180 to asparagine 181. Histidine 9 functions as the Tele-phosphohistidine intermediate in the catalytic mechanism. Glutamate 87 acts as the Proton donor/acceptor in catalysis.

This sequence belongs to the phosphoglycerate mutase family. BPG-dependent PGAM subfamily. As to quaternary structure, homodimer.

The enzyme catalyses (2R)-2-phosphoglycerate = (2R)-3-phosphoglycerate. It participates in carbohydrate degradation; glycolysis; pyruvate from D-glyceraldehyde 3-phosphate: step 3/5. Functionally, catalyzes the interconversion of 2-phosphoglycerate and 3-phosphoglycerate. The protein is 2,3-bisphosphoglycerate-dependent phosphoglycerate mutase of Hyphomonas neptunium (strain ATCC 15444).